Consider the following 622-residue polypeptide: Probable methionine--tRNA ligase, mitochondrial (622 aa).

Residues Pro67–His79 carry the 'HIGH' region motif. The short motif at Lys366 to Ser370 is the 'KMSKS' region element. An ATP-binding site is contributed by Lys369. The segment at Leu592–Ala622 is disordered. Low complexity predominate over residues Gly610 to Ala622.

This sequence belongs to the class-I aminoacyl-tRNA synthetase family.

The protein resides in the mitochondrion matrix. It catalyses the reaction tRNA(Met) + L-methionine + ATP = L-methionyl-tRNA(Met) + AMP + diphosphate. The chain is Probable methionine--tRNA ligase, mitochondrial from Neurospora crassa (strain ATCC 24698 / 74-OR23-1A / CBS 708.71 / DSM 1257 / FGSC 987).